The primary structure comprises 211 residues: MKLWDVVAVCLVLLHTASAFPLPAGKRLLEAPAEDHSLGHRRVPFALTSDSNMPEDYPDQFDDVMDFIQATIKRLKRSPDKQAAALPRRERNRQAAAASPENSRGKGRRGQRGKNRGCVLTAIHLNVTDLGLGYETKEELIFRYCSGSCEAAETMYDKILKNLSRSRRLTSDKVGQACCRPVAFDDDLSFLDDSLVYHILRKHSAKRCGCI.

The N-terminal stretch at 1–19 (MKLWDVVAVCLVLLHTASA) is a signal peptide. Positions 20–75 (FPLPAGKRLLEAPAEDHSLGHRRVPFALTSDSNMPEDYPDQFDDVMDFIQATIKRL) are excised as a propeptide. Residues 76 to 113 (KRSPDKQAAALPRRERNRQAAAASPENSRGKGRRGQRG) form a disordered region. 3 disulfide bridges follow: Cys118–Cys179, Cys145–Cys208, and Cys149–Cys210. Asn126 and Asn162 each carry an N-linked (GlcNAc...) asparagine glycan.

Belongs to the TGF-beta family. GDNF subfamily. Homodimer; disulfide-linked. Interacts with GFRA1 coreceptor and RET: forms a 2:2:2 ternary complex composed of GDNF ligand, GFRA1 and RET receptor. Interacts (via propeptide) with SORL1 (via N-terminal ectodomain); this interaction affects GDNF-regulated, but not constitutive secretion. Also interacts with SORL1 in complex with GFRA1; this interaction leads to GDNF endocytosis and lysosomal degradation. Expressed in both the central nervous system (CNS) and in non-CNS tissues, including the kidney, lung, bone, heart, liver, spleen, sciatic nerve and blood. Expressed in brain (at protein level). Localizes at the proximal ligature of the hypoglossal nerve.

It is found in the secreted. In terms of biological role, neurotrophic factor that enhances survival and morphological differentiation of dopaminergic neurons and increases their high-affinity dopamine uptake. Acts by binding to its coreceptor, GFRA1, leading to autophosphorylation and activation of the RET receptor. May also modulate local neuronal effects in distal regions of the motor neuron. Involved in the development of the neural crest. The sequence is that of Glial cell line-derived neurotrophic factor (Gdnf) from Rattus norvegicus (Rat).